The following is a 72-amino-acid chain: DNA-directed RNA polymerase subunit omega (72 aa).

It belongs to the RNA polymerase subunit omega family. As to quaternary structure, the RNAP catalytic core consists of 2 alpha, 1 beta, 1 beta' and 1 omega subunit. When a sigma factor is associated with the core the holoenzyme is formed, which can initiate transcription.

The catalysed reaction is RNA(n) + a ribonucleoside 5'-triphosphate = RNA(n+1) + diphosphate. Functionally, promotes RNA polymerase assembly. Latches the N- and C-terminal regions of the beta' subunit thereby facilitating its interaction with the beta and alpha subunits. This is DNA-directed RNA polymerase subunit omega from Clostridium botulinum (strain Loch Maree / Type A3).